We begin with the raw amino-acid sequence, 556 residues long: CDP-diacylglycerol--glycerol-3-phosphate 3-phosphatidyltransferase, mitochondrial (556 aa).

Residues 1–28 (MAVAAAAAAGPVFWRRLLGLLPGRPGLA) constitute a mitochondrion transit peptide. Ser-49 bears the Phosphoserine mark. An ATP-binding site is contributed by 124-131 (ASLYLGTG). PLD phosphodiesterase domains follow at residues 215 to 241 (TIGL…SDSY) and 460 to 493 (RGWT…GYRS). Catalysis depends on residues His-220, Lys-222, and Asp-227.

Belongs to the CDP-alcohol phosphatidyltransferase class-II family.

Its subcellular location is the mitochondrion. The catalysed reaction is a CDP-1,2-diacyl-sn-glycerol + sn-glycerol 3-phosphate = a 1,2-diacyl-sn-glycero-3-phospho-(1'-sn-glycero-3'-phosphate) + CMP + H(+). Its pathway is phospholipid metabolism; phosphatidylglycerol biosynthesis; phosphatidylglycerol from CDP-diacylglycerol: step 1/2. Its activity is regulated as follows. Activated by calcium and magnesium and inhibited by other bivalent cations. Its function is as follows. Functions in the biosynthesis of the anionic phospholipids phosphatidylglycerol and cardiolipin. The polypeptide is CDP-diacylglycerol--glycerol-3-phosphate 3-phosphatidyltransferase, mitochondrial (PGS1) (Pongo abelii (Sumatran orangutan)).